Here is a 572-residue protein sequence, read N- to C-terminus: Pentatricopeptide repeat-containing protein At1g26900, mitochondrial (572 aa).

The transit peptide at 1–117 (MTLAITSRLR…RAFSVFNQLR (117 aa)) directs the protein to the mitochondrion. PPR repeat units lie at residues 89-123 (NLFMFNTMIRGYSISDEPERAFSVFNQLRAKGLTL), 124-158 (DRFSFITTLKSCSRELCVSIGEGLHGIALRSGFMV), 159-189 (FTDLRNALIHFYCVCGKISDARKVFDEMPQS), 191-225 (DAVTFSTLMNGYLQVSKKALALDLFRIMRKSEVVV), 226-260 (NVSTLLSFLSAISDLGDLSGAESAHVLCIKIGLDL), 261-291 (DLHLITALIGMYGKTGGISSARRIFDCAIRK), 292-326 (DVVTWNCMIDQYAKTGLLEECVWLLRQMKYEKMKP), 327-361 (NSSTFVGLLSSCAYSEAAFVGRTVADLLEEERIAL), 362-392 (DAILGTALVDMYAKVGLLEKAVEIFNRMKDK), 393-427 (DVKSWTAMISGYGAHGLAREAVTLFNKMEEENCKV), 430-460 (NEITFLVVLNACSHGGLVMEGIRCFKRMVEA), and 466-496 (KVEHYGCVVDLLGRAGQLEEAYELIRNLPIT). The type E motif stretch occupies residues 501 to 572 (AWRALLAACR…EAGYSAIEIE (72 aa)).

This sequence belongs to the PPR family. PCMP-E subfamily.

The protein localises to the mitochondrion. This Arabidopsis thaliana (Mouse-ear cress) protein is Pentatricopeptide repeat-containing protein At1g26900, mitochondrial (PCMP-E54).